The primary structure comprises 308 residues: Glutamyl-Q tRNA(Asp) synthetase (308 aa).

L-glutamate-binding positions include 19 to 23 and Glu55; that span reads RFAPS. Positions 22–32 match the 'HIGH' region motif; that stretch reads PSPSGELHFGS. Zn(2+) contacts are provided by Cys111, Cys113, Tyr125, and Cys129. The L-glutamate site is built by Tyr182 and Arg200. The 'KMSKS' region motif lies at 238 to 242; that stretch reads KLSKQ. ATP is bound at residue Lys241.

The protein belongs to the class-I aminoacyl-tRNA synthetase family. GluQ subfamily. The cofactor is Zn(2+).

In terms of biological role, catalyzes the tRNA-independent activation of glutamate in presence of ATP and the subsequent transfer of glutamate onto a tRNA(Asp). Glutamate is transferred on the 2-amino-5-(4,5-dihydroxy-2-cyclopenten-1-yl) moiety of the queuosine in the wobble position of the QUC anticodon. The chain is Glutamyl-Q tRNA(Asp) synthetase from Shigella flexneri.